A 227-amino-acid polypeptide reads, in one-letter code: NADH-quinone oxidoreductase subunit C (227 aa).

Belongs to the complex I 30 kDa subunit family. NDH-1 is composed of 14 different subunits. Subunits NuoB, C, D, E, F, and G constitute the peripheral sector of the complex.

It localises to the cell inner membrane. It carries out the reaction a quinone + NADH + 5 H(+)(in) = a quinol + NAD(+) + 4 H(+)(out). In terms of biological role, NDH-1 shuttles electrons from NADH, via FMN and iron-sulfur (Fe-S) centers, to quinones in the respiratory chain. The immediate electron acceptor for the enzyme in this species is believed to be ubiquinone. Couples the redox reaction to proton translocation (for every two electrons transferred, four hydrogen ions are translocated across the cytoplasmic membrane), and thus conserves the redox energy in a proton gradient. This chain is NADH-quinone oxidoreductase subunit C, found in Legionella pneumophila (strain Paris).